The sequence spans 351 residues: Methionine import ATP-binding protein MetN (351 aa).

Positions Val-4–Val-249 constitute an ABC transporter domain. Gly-41 to Ser-48 contacts ATP.

Belongs to the ABC transporter superfamily. Methionine importer (TC 3.A.1.24) family. As to quaternary structure, the complex is composed of two ATP-binding proteins (MetN), two transmembrane proteins (MetI) and a solute-binding protein (MetQ).

The protein localises to the cell membrane. The catalysed reaction is L-methionine(out) + ATP + H2O = L-methionine(in) + ADP + phosphate + H(+). It carries out the reaction D-methionine(out) + ATP + H2O = D-methionine(in) + ADP + phosphate + H(+). Its function is as follows. Part of the ABC transporter complex MetNIQ involved in methionine import. Responsible for energy coupling to the transport system. This chain is Methionine import ATP-binding protein MetN, found in Lactobacillus delbrueckii subsp. bulgaricus (strain ATCC BAA-365 / Lb-18).